The following is a 461-amino-acid chain: Transforming growth factor beta-1-induced transcript 1 protein (461 aa).

An N-acetylmethionine modification is found at M1. The disordered stretch occupies residues 1 to 86 (MEDLDALLSD…PPFSSSSGVL (86 aa)). Positions 1–200 (MEDLDALLSD…GCPSPPGQTN (200 aa)) are transcription activation. Residues 1 to 240 (MEDLDALLSD…CNKPIAGQVV (240 aa)) are interaction with PTK2B/PYK2. Positions 3–15 (DLDALLSDLETTT) match the LD motif 1 motif. At T33 the chain carries Phosphothreonine. Y38 bears the Phosphotyrosine mark. Residues 41–52 (QPQTGSGESSGA) show a composition bias toward polar residues. At Y60 the chain carries Phosphotyrosine; by FAK2 and FYN. S68 is subject to Phosphoserine. Residues 69-83 (PKSVAPVAPPFSSSS) show a composition bias toward low complexity. The tract at residues 83–136 (SGVLGNGLCELDRLLQELNATQFNITDEIMSQFPSSKMAEGEGKEDQSEDKSIT) is interaction with PTK2/FAK1. Positions 92 to 104 (ELDRLLQELNATQ) match the LD motif 2 motif. The interval 116–154 (PSSKMAEGEGKEDQSEDKSITTVPSSTFPAPSKPSATSA) is disordered. The span at 121–134 (AEGEGKEDQSEDKS) shows a compositional bias: basic and acidic residues. Polar residues predominate over residues 135–154 (ITTVPSSTFPAPSKPSATSA). 4 positions are modified to phosphoserine: S140, S141, S164, and S186. An LD motif 3 motif is present at residues 157 to 168 (ELDRLMASLSDF). The segment at 171–204 (QNHLPASGPPQPPAVSPTREGCPSPPGQTNKGSL) is disordered. Position 188 is a phosphothreonine (T188). S194 carries the post-translational modification Phosphoserine. Positions 203 to 215 (SLDTMLGLLQSDL) match the LD motif 4 motif. LIM zinc-binding domains follow at residues 226–285 (GLCG…RFSP), 286–343 (RCGF…QLFA), 344–403 (PRCQ…QRGS), and 404–461 (LCAT…KLFG). A Phosphoserine modification is found at S403. Position 407 is a phosphothreonine (T407).

It belongs to the paxillin family. Homooligomer. Interacts with PPARG. Interacts with TRAF4. Interacts with CRIP2. Interacts with HSPB1. Interacts with ILK. Interacts with LIMS1 and LIMS2. Interacts with NCK2. Interacts with NUDT16L1. Interacts with PAK. Interacts with PTPN12. Interacts with TCF3. Interacts with TCF7L2. Interacts with VCL. Interacts (via LD motif 3) with GIT1. Also interacts with GIT2. Forms a complex with ARHGEF7. Interacts with AR/androgen receptor in a ligand-dependent manner. Interacts with CSK. Interacts with PTK2/FAK1 and PTK2B/PYK2. Interacts with SLC6A3 and SLC6A4. Interacts with NR3C1. Interacts with SMAD3. Interacts with MAPK15. Interacts with SRC. Interacts with LYN. Interacts with talin. Interacts (via LIM zinc-binding domain 2) with CBLC (via RING-type zinc finger); the interaction is direct and enhances CBLC E3 ubiquitin-protein ligase activity. Interacts with PARVA. Interacts with PXN. Post-translationally, phosphorylated by gonadotropin-releasing hormone-activated SRC. Strongly expressed in large intestine, lung, spleen, testis, uterus and to a lower extent in brain, kidney and liver (at protein level). In brain, expressed by neuronal and non neuronal cells (at protein level).

The protein resides in the cell junction. Its subcellular location is the focal adhesion. It localises to the nucleus matrix. The protein localises to the cytoplasm. It is found in the cytoskeleton. Functions as a molecular adapter coordinating multiple protein-protein interactions at the focal adhesion complex and in the nucleus. Links various intracellular signaling modules to plasma membrane receptors and regulates the Wnt and TGFB signaling pathways. May also regulate SLC6A3 and SLC6A4 targeting to the plasma membrane hence regulating their activity. In the nucleus, functions as a nuclear receptor coactivator regulating glucocorticoid, androgen, mineralocorticoid and progesterone receptor transcriptional activity. May play a role in the processes of cell growth, proliferation, migration, differentiation and senescence. May have a zinc-dependent DNA-binding activity. This Rattus norvegicus (Rat) protein is Transforming growth factor beta-1-induced transcript 1 protein (Tgfb1i1).